The sequence spans 346 residues: Lipase chaperone (346 aa).

Residues 10–30 (TIVFGVITSVLLLLLLIYYVF) traverse the membrane as a helical segment.

Belongs to the lipase chaperone family.

The protein localises to the cell inner membrane. Functionally, may be involved in the folding of the extracellular lipase during its passage through the periplasm. The chain is Lipase chaperone (lifO) from Acinetobacter venetianus (strain ATCC 31012 / DSM 23050 / BCRC 14357 / CCUG 45561 / CIP 110063 / KCTC 2702 / LMG 19082 / RAG-1).